A 218-amino-acid polypeptide reads, in one-letter code: tRNA (guanine-N(7)-)-methyltransferase (218 aa).

S-adenosyl-L-methionine is bound by residues E46, E71, D98, and D120. D120 is an active-site residue. K124 is a binding site for substrate. The interaction with RNA stretch occupies residues 126-131 (RHEKRR). Substrate is bound by residues D156 and 196-199 (TEYE).

This sequence belongs to the class I-like SAM-binding methyltransferase superfamily. TrmB family.

The enzyme catalyses guanosine(46) in tRNA + S-adenosyl-L-methionine = N(7)-methylguanosine(46) in tRNA + S-adenosyl-L-homocysteine. It functions in the pathway tRNA modification; N(7)-methylguanine-tRNA biosynthesis. In terms of biological role, catalyzes the formation of N(7)-methylguanine at position 46 (m7G46) in tRNA. The sequence is that of tRNA (guanine-N(7)-)-methyltransferase from Lactobacillus johnsonii (strain CNCM I-12250 / La1 / NCC 533).